The chain runs to 120 residues: uncharacterized protein (120 aa).

It is found in the virion. This is an uncharacterized protein from Acanthamoeba polyphaga mimivirus (APMV).